Consider the following 132-residue polypeptide: D-ribose pyranase (132 aa).

His-20 serves as the catalytic Proton donor. Residues Asp-28, His-99, and 121–123 (YAN) each bind substrate.

Belongs to the RbsD / FucU family. RbsD subfamily. Homodecamer.

Its subcellular location is the cytoplasm. It carries out the reaction beta-D-ribopyranose = beta-D-ribofuranose. It functions in the pathway carbohydrate metabolism; D-ribose degradation; D-ribose 5-phosphate from beta-D-ribopyranose: step 1/2. Catalyzes the interconversion of beta-pyran and beta-furan forms of D-ribose. The polypeptide is D-ribose pyranase (Chromobacterium violaceum (strain ATCC 12472 / DSM 30191 / JCM 1249 / CCUG 213 / NBRC 12614 / NCIMB 9131 / NCTC 9757 / MK)).